The primary structure comprises 420 residues: Diphosphomevalonate decarboxylase 2 (420 aa).

25–28 (YWGK) is a binding site for (R)-5-diphosphomevalonate. A Peroxisomal targeting signal PTS2 motif is present at residues 42 to 50 (SVTLDPDHL). (R)-5-diphosphomevalonate contacts are provided by residues Arg80, 163–168 (SGSACR), and Thr219.

It belongs to the diphosphomevalonate decarboxylase family. In terms of assembly, homodimer.

Its subcellular location is the peroxisome. It carries out the reaction (R)-5-diphosphomevalonate + ATP = isopentenyl diphosphate + ADP + phosphate + CO2. It functions in the pathway isoprenoid biosynthesis; isopentenyl diphosphate biosynthesis via mevalonate pathway; isopentenyl diphosphate from (R)-mevalonate: step 3/3. Performs the first committed step in the biosynthesis of isoprene-containing compounds such as sterols and terpenoids. Component of the triterpenes (e.g. ginsenosides or panaxosides) and phytosterols biosynthetic pathways. Promotes the accumulation of stigmasterol and beta-sitosterol. The polypeptide is Diphosphomevalonate decarboxylase 2 (Panax ginseng (Korean ginseng)).